Reading from the N-terminus, the 133-residue chain is uncharacterized protein (133 aa).

Positions valine 44 to asparagine 79 are disordered. A compositionally biased stretch (polar residues) spans lysine 63–asparagine 79.

It localises to the plastid. The protein localises to the chloroplast. This is an uncharacterized protein from Chlorella vulgaris (Green alga).